The sequence spans 189 residues: MTDPKDTINIENVVASTGIGQELDLQSVAMDLEGADYDPEQFPGLVYRTQEPKSAALIFRSGKIVCTGAKSTDDVHESLEIVFDKLRELQIPVDDDPEITVQNIVTSADLGENLNLNAIAIGLGLENIEYEPEQFPGLVYRLDEPSVVALLFGSGKLVITGGKQPTDAEAAVDVIISRLSELGLLNGSF.

A run of 2 repeats spans residues 10–86 (IENV…FDKL) and 101–179 (VQNI…ISRL).

This sequence belongs to the TBP family.

Functionally, general factor that plays a role in the activation of archaeal genes transcribed by RNA polymerase. Binds specifically to the TATA box promoter element which lies close to the position of transcription initiation. The polypeptide is TATA-box-binding protein 1 (tbp1) (Haloferax volcanii (strain ATCC 29605 / DSM 3757 / JCM 8879 / NBRC 14742 / NCIMB 2012 / VKM B-1768 / DS2) (Halobacterium volcanii)).